Consider the following 115-residue polypeptide: UPF0295 protein BLi00901/BL05075 (115 aa).

Helical transmembrane passes span 18–38 and 41–61; these read LVFIGFIIMYVGVFFRSSVLL and VFMILGVLSILLSTAVYFWIG.

Belongs to the UPF0295 family.

The protein resides in the cell membrane. The chain is UPF0295 protein BLi00901/BL05075 from Bacillus licheniformis (strain ATCC 14580 / DSM 13 / JCM 2505 / CCUG 7422 / NBRC 12200 / NCIMB 9375 / NCTC 10341 / NRRL NRS-1264 / Gibson 46).